The following is a 565-amino-acid chain: Proline--tRNA ligase (565 aa).

This sequence belongs to the class-II aminoacyl-tRNA synthetase family. ProS type 1 subfamily. As to quaternary structure, homodimer.

The protein resides in the cytoplasm. The catalysed reaction is tRNA(Pro) + L-proline + ATP = L-prolyl-tRNA(Pro) + AMP + diphosphate. Its function is as follows. Catalyzes the attachment of proline to tRNA(Pro) in a two-step reaction: proline is first activated by ATP to form Pro-AMP and then transferred to the acceptor end of tRNA(Pro). As ProRS can inadvertently accommodate and process non-cognate amino acids such as alanine and cysteine, to avoid such errors it has two additional distinct editing activities against alanine. One activity is designated as 'pretransfer' editing and involves the tRNA(Pro)-independent hydrolysis of activated Ala-AMP. The other activity is designated 'posttransfer' editing and involves deacylation of mischarged Ala-tRNA(Pro). The misacylated Cys-tRNA(Pro) is not edited by ProRS. The polypeptide is Proline--tRNA ligase (Lactobacillus delbrueckii subsp. bulgaricus (strain ATCC BAA-365 / Lb-18)).